The chain runs to 745 residues: Polyribonucleotide nucleotidyltransferase (745 aa).

Mg(2+)-binding residues include D487 and D493. The region spanning 554–613 is the KH domain; that stretch reads PRIETMQIPTDKIRDVIGTGGKIIREIVEKTGAKINIEDTGIVKIASSDGKAIKAAYNWI. The S1 motif domain maps to 623–691; sequence GTIYDGTIVK…ERGKIRLSMK (69 aa). Residues 695-745 are disordered; the sequence is QETGEDLTEKLKAERAERGEPEREERSDRGDRGDRGPRRDRGERRRESSGE. Positions 701–745 are enriched in basic and acidic residues; the sequence is LTEKLKAERAERGEPEREERSDRGDRGDRGPRRDRGERRRESSGE.

It belongs to the polyribonucleotide nucleotidyltransferase family. It depends on Mg(2+) as a cofactor.

It localises to the cytoplasm. It carries out the reaction RNA(n+1) + phosphate = RNA(n) + a ribonucleoside 5'-diphosphate. Functionally, involved in mRNA degradation. Catalyzes the phosphorolysis of single-stranded polyribonucleotides processively in the 3'- to 5'-direction. The protein is Polyribonucleotide nucleotidyltransferase of Methylorubrum extorquens (strain CM4 / NCIMB 13688) (Methylobacterium extorquens).